The chain runs to 294 residues: Ribosomal RNA small subunit methyltransferase H (294 aa).

Residues G31–Y33, D49, F76, D97, and Q104 each bind S-adenosyl-L-methionine.

It belongs to the methyltransferase superfamily. RsmH family.

It is found in the cytoplasm. The catalysed reaction is cytidine(1402) in 16S rRNA + S-adenosyl-L-methionine = N(4)-methylcytidine(1402) in 16S rRNA + S-adenosyl-L-homocysteine + H(+). In terms of biological role, specifically methylates the N4 position of cytidine in position 1402 (C1402) of 16S rRNA. The polypeptide is Ribosomal RNA small subunit methyltransferase H (Wolbachia pipientis subsp. Culex pipiens (strain wPip)).